The following is a 204-amino-acid chain: INSIG protein homolog (204 aa).

Helical transmembrane passes span 5–27, 47–64, 76–97, 101–118, and 124–145; these read ISEA…HSHV, FWFP…AELR, ARQA…ALVH, VVPV…TWCV, and GAAC…LVQL. H26 serves as a coordination point for a 1,2-diacyl-sn-glycerol. Y150 contributes to the a 1,2-diacyl-sn-glycerol binding site. A helical membrane pass occupies residues 162–179; it reads PFLAPLYFAFGVVAALLG.

Belongs to the INSIG family. In terms of assembly, homotrimer.

The protein resides in the membrane. Diacylglycerol-binding protein. The sequence is that of INSIG protein homolog from Mycolicibacterium vanbaalenii (strain DSM 7251 / JCM 13017 / BCRC 16820 / KCTC 9966 / NRRL B-24157 / PYR-1) (Mycobacterium vanbaalenii).